Here is a 220-residue protein sequence, read N- to C-terminus: Cytidylate kinase (220 aa).

9–17 is an ATP binding site; sequence GPAASGKST.

This sequence belongs to the cytidylate kinase family. Type 1 subfamily.

The protein localises to the cytoplasm. The enzyme catalyses CMP + ATP = CDP + ADP. The catalysed reaction is dCMP + ATP = dCDP + ADP. The chain is Cytidylate kinase from Thermotoga sp. (strain RQ2).